The chain runs to 373 residues: S-adenosylmethionine:tRNA ribosyltransferase-isomerase (373 aa).

The protein belongs to the QueA family. As to quaternary structure, monomer.

The protein localises to the cytoplasm. It carries out the reaction 7-aminomethyl-7-carbaguanosine(34) in tRNA + S-adenosyl-L-methionine = epoxyqueuosine(34) in tRNA + adenine + L-methionine + 2 H(+). It participates in tRNA modification; tRNA-queuosine biosynthesis. Transfers and isomerizes the ribose moiety from AdoMet to the 7-aminomethyl group of 7-deazaguanine (preQ1-tRNA) to give epoxyqueuosine (oQ-tRNA). This chain is S-adenosylmethionine:tRNA ribosyltransferase-isomerase, found in Rhizobium etli (strain CIAT 652).